The sequence spans 188 residues: Elongation factor P (188 aa).

It belongs to the elongation factor P family.

Its subcellular location is the cytoplasm. The protein operates within protein biosynthesis; polypeptide chain elongation. Its function is as follows. Involved in peptide bond synthesis. Stimulates efficient translation and peptide-bond synthesis on native or reconstituted 70S ribosomes in vitro. Probably functions indirectly by altering the affinity of the ribosome for aminoacyl-tRNA, thus increasing their reactivity as acceptors for peptidyl transferase. This is Elongation factor P from Chlorobaculum tepidum (strain ATCC 49652 / DSM 12025 / NBRC 103806 / TLS) (Chlorobium tepidum).